The sequence spans 234 residues: VIGGDECNINEHRSLVAFFNSTGFFCSGTLVNEEWVLSAAHCDSTNFQMKLGVHSKKVLNEDEQTRNPKEKFICPNKKNDEVLDKDIMLIKLDSRVSNSEHIAPLSLPSSPPSVGSVCHIMGWGSITPIKETYPDVPYCANINLLDDEVCQAGYPELLAEYRTLCAGILEGGKDTCGGDSGGPLICNGQFQGIVSYGAHPCGQSLKPGIYTKVFDYSDWIQSIIAGNTDASCPP.

Positions 1–225 (VIGGDECNIN…YSDWIQSIIA (225 aa)) constitute a Peptidase S1 domain. 6 disulfides stabilise this stretch: Cys-7–Cys-139, Cys-26–Cys-42, Cys-74–Cys-232, Cys-118–Cys-186, Cys-150–Cys-165, and Cys-176–Cys-201. A glycan (N-linked (GlcNAc...) asparagine) is linked at Asn-20. Residues His-41 and Asp-86 each act as charge relay system in the active site. The active-site Charge relay system is the Ser-180.

It belongs to the peptidase S1 family. Snake venom subfamily. As to quaternary structure, monomer. Expressed by the venom gland.

Its subcellular location is the secreted. In terms of biological role, bradykinin-releasing enzyme. Releases bradykinin from bovine HMW kininogen. Has anticoagulant activity. Increases permeability of capillaries by intradermal injection into rabbits. The protein is Bradykinin-releasing enzyme KR-E-1 of Gloydius ussuriensis (Ussuri mamushi).